The primary structure comprises 182 residues: MKELNKKEKEYLLNSIRAIKDFPKPGIVFRDITTLLNDKEAFNFLMDHLTARYENFGIDFIAGIESRGFIFGAALAARLRLPFVPIRKPKKLPYITISQKYSLEYGVDEVQIHIDAFGEKEDARVLLIDDLIATGGTAKASVELIDQTKAKCVEACFLIDLKELGGSGTLKKLTKIYSVLEI.

Belongs to the purine/pyrimidine phosphoribosyltransferase family. Homodimer.

Its subcellular location is the cytoplasm. It catalyses the reaction AMP + diphosphate = 5-phospho-alpha-D-ribose 1-diphosphate + adenine. Its pathway is purine metabolism; AMP biosynthesis via salvage pathway; AMP from adenine: step 1/1. Functionally, catalyzes a salvage reaction resulting in the formation of AMP, that is energically less costly than de novo synthesis. The sequence is that of Adenine phosphoribosyltransferase from Campylobacter curvus (strain 525.92).